Reading from the N-terminus, the 127-residue chain is Fluoride-specific ion channel FluC (127 aa).

The next 4 helical transmembrane spans lie at 1-21 (MPQG…GACL), 39-59 (FGTL…YGVI), 72-92 (LIGV…VETL), and 105-125 (ANVF…IELM). The Na(+) site is built by Gly79 and Thr82.

Belongs to the fluoride channel Fluc/FEX (TC 1.A.43) family.

It is found in the cell inner membrane. The catalysed reaction is fluoride(in) = fluoride(out). Na(+) is not transported, but it plays an essential structural role and its presence is essential for fluoride channel function. In terms of biological role, fluoride-specific ion channel. Important for reducing fluoride concentration in the cell, thus reducing its toxicity. The sequence is that of Fluoride-specific ion channel FluC from Alteromonas mediterranea (strain DSM 17117 / CIP 110805 / LMG 28347 / Deep ecotype).